A 458-amino-acid polypeptide reads, in one-letter code: Argininosuccinate lyase (458 aa).

The protein belongs to the lyase 1 family. Argininosuccinate lyase subfamily.

Its subcellular location is the cytoplasm. The enzyme catalyses 2-(N(omega)-L-arginino)succinate = fumarate + L-arginine. It participates in amino-acid biosynthesis; L-arginine biosynthesis; L-arginine from L-ornithine and carbamoyl phosphate: step 3/3. This is Argininosuccinate lyase from Salmonella choleraesuis (strain SC-B67).